Reading from the N-terminus, the 785-residue chain is DNA ligase (785 aa).

Residues 32–36 (DAEYD), 81–82 (SL), and glutamate 121 contribute to the NAD(+) site. The active-site N6-AMP-lysine intermediate is the lysine 123. Residues arginine 144, glutamate 181, lysine 294, and lysine 318 each contribute to the NAD(+) site. Cysteine 412, cysteine 415, cysteine 442, and cysteine 448 together coordinate Zn(2+). Positions 702–785 (VEGLPEAGHT…AFLAKHNIPV (84 aa)) constitute a BRCT domain.

Belongs to the NAD-dependent DNA ligase family. LigA subfamily. Mg(2+) is required as a cofactor. It depends on Mn(2+) as a cofactor.

The enzyme catalyses NAD(+) + (deoxyribonucleotide)n-3'-hydroxyl + 5'-phospho-(deoxyribonucleotide)m = (deoxyribonucleotide)n+m + AMP + beta-nicotinamide D-nucleotide.. DNA ligase that catalyzes the formation of phosphodiester linkages between 5'-phosphoryl and 3'-hydroxyl groups in double-stranded DNA using NAD as a coenzyme and as the energy source for the reaction. It is essential for DNA replication and repair of damaged DNA. In Pseudomonas fluorescens (strain SBW25), this protein is DNA ligase.